The primary structure comprises 471 residues: Secretogranin-3 (471 aa).

An N-terminal signal peptide occupies residues 1–22; that stretch reads MGFLWTGTWIVVLMLHSSPIQA. Disordered stretches follow at residues 23–72 and 86–105; these read FPKP…ESNY and EKEK…NDNK. A compositionally biased stretch (basic and acidic residues) spans 32 to 45; the sequence is KPLHNRELSAERPL. Ser-40 bears the Phosphoserine mark. Ser-40 is a glycosylation site (O-linked (Xyl...) (chondroitin sulfate) serine). An N-linked (GlcNAc...) asparagine glycan is attached at Asn-71. Positions 86–96 are enriched in basic and acidic residues; the sequence is EKEKNEKERQS. Asn-353 is a glycosylation site (N-linked (GlcNAc...) asparagine). The interval 357 to 409 is disordered; that stretch reads LFAVPSEKSHEETDSTKEEAAKMEKEYGTLKDSTKDDDSNPRGKTDEHKGKTE. Residues 363–409 are compositionally biased toward basic and acidic residues; it reads EKSHEETDSTKEEAAKMEKEYGTLKDSTKDDDSNPRGKTDEHKGKTE. Ser-365 carries the phosphoserine modification.

In terms of assembly, interacts with CHGA. Interacts with secretogranin II/SCG2. Interacts (via C-terminus) with CPE.

The protein resides in the cytoplasmic vesicle. The protein localises to the secretory vesicle. It is found in the secretory vesicle membrane. It localises to the secreted. Its function is as follows. Member of the granin protein family that regulates the biogenesis of secretory granules. Acts as a sorting receptor for intragranular proteins including chromogranin A/CHGA. May also play a role in angiogenesis. Promotes endothelial proliferation, migration and tube formation through MEK/ERK signaling pathway. This is Secretogranin-3 (SCG3) from Bos taurus (Bovine).